Here is a 161-residue protein sequence, read N- to C-terminus: Dermonecrotic toxin LarSicTox-alphaI-1 (161 aa).

It belongs to the arthropod phospholipase D family. Class II subfamily. The cofactor is Mg(2+). In terms of processing, contains 2 disulfide bonds. Expressed by the venom gland.

It is found in the secreted. The catalysed reaction is an N-(acyl)-sphingosylphosphocholine = an N-(acyl)-sphingosyl-1,3-cyclic phosphate + choline. It carries out the reaction an N-(acyl)-sphingosylphosphoethanolamine = an N-(acyl)-sphingosyl-1,3-cyclic phosphate + ethanolamine. It catalyses the reaction a 1-acyl-sn-glycero-3-phosphocholine = a 1-acyl-sn-glycero-2,3-cyclic phosphate + choline. The enzyme catalyses a 1-acyl-sn-glycero-3-phosphoethanolamine = a 1-acyl-sn-glycero-2,3-cyclic phosphate + ethanolamine. Dermonecrotic toxins cleave the phosphodiester linkage between the phosphate and headgroup of certain phospholipids (sphingolipid and lysolipid substrates), forming an alcohol (often choline) and a cyclic phosphate. This toxin acts on sphingomyelin (SM). It may also act on ceramide phosphoethanolamine (CPE), lysophosphatidylcholine (LPC) and lysophosphatidylethanolamine (LPE), but not on lysophosphatidylserine (LPS), and lysophosphatidylglycerol (LPG). It acts by transphosphatidylation, releasing exclusively cyclic phosphate products as second products. Induces dermonecrosis, hemolysis, increased vascular permeability, edema, inflammatory response, and platelet aggregation. This Loxosceles arizonica (Arizona brown spider) protein is Dermonecrotic toxin LarSicTox-alphaI-1.